The following is a 355-amino-acid chain: Histidine biosynthesis bifunctional protein HisB (355 aa).

The interval 1 to 166 (MKQKILFIDR…DITKEIIKRN (166 aa)) is histidinol-phosphatase. The active-site Nucleophile is the Asp-9. Residues Asp-9 and Asp-11 each contribute to the Mg(2+) site. Asp-11 serves as the catalytic Proton donor. 4 residues coordinate Zn(2+): Cys-93, His-95, Cys-101, and Cys-103. A Mg(2+)-binding site is contributed by Asp-130. The interval 167-355 (RYREVIRETK…NTLPTSKGIL (189 aa)) is imidazoleglycerol-phosphate dehydratase.

This sequence in the N-terminal section; belongs to the histidinol-phosphatase family. The protein in the C-terminal section; belongs to the imidazoleglycerol-phosphate dehydratase family. Requires Mg(2+) as cofactor. The cofactor is Zn(2+).

Its subcellular location is the cytoplasm. The enzyme catalyses D-erythro-1-(imidazol-4-yl)glycerol 3-phosphate = 3-(imidazol-4-yl)-2-oxopropyl phosphate + H2O. The catalysed reaction is L-histidinol phosphate + H2O = L-histidinol + phosphate. It participates in amino-acid biosynthesis; L-histidine biosynthesis; L-histidine from 5-phospho-alpha-D-ribose 1-diphosphate: step 6/9. The protein operates within amino-acid biosynthesis; L-histidine biosynthesis; L-histidine from 5-phospho-alpha-D-ribose 1-diphosphate: step 8/9. The polypeptide is Histidine biosynthesis bifunctional protein HisB (Buchnera aphidicola subsp. Schizaphis graminum (strain Sg)).